Reading from the N-terminus, the 565-residue chain is uncharacterized protein (565 aa).

5 consecutive transmembrane segments (helical) span residues phenylalanine 4–valine 26, glycine 33–alanine 55, serine 68–leucine 90, tyrosine 97–phenylalanine 119, and isoleucine 162–leucine 184. RCK C-terminal domains follow at residues proline 210–glutamate 295 and valine 296–valine 379. 5 helical membrane-spanning segments follow: residues leucine 389–glycine 411, glycine 415–isoleucine 432, leucine 453–threonine 472, isoleucine 482–isoleucine 504, and tryptophan 539–methionine 561.

This sequence belongs to the AAE transporter (TC 2.A.81) family.

The protein resides in the cell membrane. This is an uncharacterized protein from Bordetella parapertussis (strain 12822 / ATCC BAA-587 / NCTC 13253).